We begin with the raw amino-acid sequence, 462 residues long: A-type ATP synthase subunit B (462 aa).

Belongs to the ATPase alpha/beta chains family. In terms of assembly, has multiple subunits with at least A(3), B(3), C, D, E, F, H, I and proteolipid K(x).

The protein localises to the cell membrane. In terms of biological role, component of the A-type ATP synthase that produces ATP from ADP in the presence of a proton gradient across the membrane. The B chain is a regulatory subunit. In Methanococcus maripaludis (strain C7 / ATCC BAA-1331), this protein is A-type ATP synthase subunit B.